A 376-amino-acid chain; its full sequence is Erythronate-4-phosphate dehydrogenase (376 aa).

Residues serine 45 and threonine 67 each coordinate substrate. Residues aspartate 147, 209–211 (ASR), and aspartate 235 contribute to the NAD(+) site. Arginine 211 is an active-site residue. The active site involves glutamate 240. Histidine 257 functions as the Proton donor in the catalytic mechanism. Glycine 260 lines the NAD(+) pocket. Tyrosine 261 contributes to the substrate binding site.

It belongs to the D-isomer specific 2-hydroxyacid dehydrogenase family. PdxB subfamily. As to quaternary structure, homodimer.

The protein resides in the cytoplasm. The enzyme catalyses 4-phospho-D-erythronate + NAD(+) = (R)-3-hydroxy-2-oxo-4-phosphooxybutanoate + NADH + H(+). The protein operates within cofactor biosynthesis; pyridoxine 5'-phosphate biosynthesis; pyridoxine 5'-phosphate from D-erythrose 4-phosphate: step 2/5. Catalyzes the oxidation of erythronate-4-phosphate to 3-hydroxy-2-oxo-4-phosphonooxybutanoate. The polypeptide is Erythronate-4-phosphate dehydrogenase (Aeromonas hydrophila subsp. hydrophila (strain ATCC 7966 / DSM 30187 / BCRC 13018 / CCUG 14551 / JCM 1027 / KCTC 2358 / NCIMB 9240 / NCTC 8049)).